The primary structure comprises 289 residues: ATP synthase subunit a (289 aa).

Helical transmembrane passes span 43–63 (AFHV…VLLF), 103–123 (VIAP…AVDL), 160–180 (FSVF…GGFI), 193–213 (IFVQ…TLIA), 232–252 (VFIL…GLGV), and 259–279 (AVFH…LTIV).

It belongs to the ATPase A chain family. F-type ATPases have 2 components, CF(1) - the catalytic core - and CF(0) - the membrane proton channel. CF(1) has five subunits: alpha(3), beta(3), gamma(1), delta(1), epsilon(1). CF(0) has three main subunits: a(1), b(2) and c(9-12). The alpha and beta chains form an alternating ring which encloses part of the gamma chain. CF(1) is attached to CF(0) by a central stalk formed by the gamma and epsilon chains, while a peripheral stalk is formed by the delta and b chains.

It localises to the cell inner membrane. Its function is as follows. Key component of the proton channel; it plays a direct role in the translocation of protons across the membrane. This Pseudomonas fluorescens (strain Pf0-1) protein is ATP synthase subunit a.